Reading from the N-terminus, the 72-residue chain is Protein SlyX homolog (72 aa).

Belongs to the SlyX family.

The protein is Protein SlyX homolog of Vibrio cholerae serotype O1 (strain ATCC 39541 / Classical Ogawa 395 / O395).